We begin with the raw amino-acid sequence, 453 residues long: tRNA-2-methylthio-N(6)-dimethylallyladenosine synthase (453 aa).

The MTTase N-terminal domain occupies 17-135 (GTFFIETWGC…FPEYLNRAKQ (119 aa)). [4Fe-4S] cluster contacts are provided by Cys26, Cys62, Cys96, Cys172, Cys176, and Cys179. Residues 158 to 388 (RKSSTKAFVT…VEVVNKSCEK (231 aa)) enclose the Radical SAM core domain. The TRAM domain occupies 391–453 (KKYQDRIVKV…LSFSLEGEEV (63 aa)).

It belongs to the methylthiotransferase family. MiaB subfamily. Monomer. It depends on [4Fe-4S] cluster as a cofactor.

It is found in the cytoplasm. The enzyme catalyses N(6)-dimethylallyladenosine(37) in tRNA + (sulfur carrier)-SH + AH2 + 2 S-adenosyl-L-methionine = 2-methylsulfanyl-N(6)-dimethylallyladenosine(37) in tRNA + (sulfur carrier)-H + 5'-deoxyadenosine + L-methionine + A + S-adenosyl-L-homocysteine + 2 H(+). In terms of biological role, catalyzes the methylthiolation of N6-(dimethylallyl)adenosine (i(6)A), leading to the formation of 2-methylthio-N6-(dimethylallyl)adenosine (ms(2)i(6)A) at position 37 in tRNAs that read codons beginning with uridine. The polypeptide is tRNA-2-methylthio-N(6)-dimethylallyladenosine synthase (Clostridium tetani (strain Massachusetts / E88)).